Consider the following 518-residue polypeptide: Putative beta-xylosidase (518 aa).

D47 acts as the Proton acceptor in catalysis. Residue E203 is the Proton donor of the active site.

It belongs to the glycosyl hydrolase 43 family.

The enzyme catalyses Hydrolysis of (1-&gt;4)-beta-D-xylans, to remove successive D-xylose residues from the non-reducing termini.. The polypeptide is Putative beta-xylosidase (Xylanibacter ruminicola (Prevotella ruminicola)).